We begin with the raw amino-acid sequence, 266 residues long: N-acetyltransferase ECO1 (266 aa).

The CCHH-type zinc finger occupies 31-55 (KKCTECQMSYIIDSPADCAEHKKYH). Residues 108–266 (TPGKTAEVKA…SGELLIPCYI (159 aa)) form the N-acetyltransferase domain.

It belongs to the acetyltransferase family. ECO subfamily.

Its subcellular location is the nucleus. Its function is as follows. Probable acetyltransferase required for the establishment of sister chromatid cohesion and couple the processes of cohesion and DNA replication to ensure that only sister chromatids become paired together. In contrast to the structural cohesins, the deposition and establishment factors are required only during S phase. Acts by acetylating the cohesin complex component SMC3. This is N-acetyltransferase ECO1 (ECO1) from Eremothecium gossypii (strain ATCC 10895 / CBS 109.51 / FGSC 9923 / NRRL Y-1056) (Yeast).